Reading from the N-terminus, the 349-residue chain is AA9 family lytic polysaccharide monooxygenase A (349 aa).

Positions 1–19 (MKSTFGLLALAAAAKLVSA) are cleaved as a signal peptide. Cu(2+)-binding residues include H20 and H102. C62 and C183 form a disulfide bridge. H169 serves as a coordination point for O2. Y180 lines the Cu(2+) pocket. The disordered stretch occupies residues 233–304 (DGSSSGSSGS…SGSNSGSDSC (72 aa)). Low complexity-rich tracts occupy residues 234–262 (GSSS…AVPT) and 269–304 (TSAT…SDSC). Residues 311-347 (GSVKIYGQCGGQNYSGPTSCEAGLICKEWNPYYHQCV) form the CBM1 domain. N-linked (GlcNAc...) asparagine glycosylation is present at N323.

This sequence belongs to the polysaccharide monooxygenase AA9 family. Requires Cu(2+) as cofactor.

It localises to the secreted. It carries out the reaction [(1-&gt;4)-beta-D-glucosyl]n+m + reduced acceptor + O2 = 4-dehydro-beta-D-glucosyl-[(1-&gt;4)-beta-D-glucosyl]n-1 + [(1-&gt;4)-beta-D-glucosyl]m + acceptor + H2O.. In terms of biological role, lytic polysaccharide monooxygenase (LPMO) that depolymerizes crystalline and amorphous polysaccharides via the oxidation of scissile alpha- or beta-(1-4)-glycosidic bonds, yielding C4 oxidation products. Catalysis by LPMOs requires the reduction of the active-site copper from Cu(II) to Cu(I) by a reducing agent and H(2)O(2) or O(2) as a cosubstrate. This Aspergillus fumigatus (strain CBS 144.89 / FGSC A1163 / CEA10) (Neosartorya fumigata) protein is AA9 family lytic polysaccharide monooxygenase A (eglD).